A 298-amino-acid chain; its full sequence is Acetylglutamate kinase (298 aa).

Substrate is bound by residues 69-70 (GG), Arg91, and Asn196.

It belongs to the acetylglutamate kinase family. ArgB subfamily.

It localises to the cytoplasm. It carries out the reaction N-acetyl-L-glutamate + ATP = N-acetyl-L-glutamyl 5-phosphate + ADP. Its pathway is amino-acid biosynthesis; L-arginine biosynthesis; N(2)-acetyl-L-ornithine from L-glutamate: step 2/4. Functionally, catalyzes the ATP-dependent phosphorylation of N-acetyl-L-glutamate. This is Acetylglutamate kinase from Rhodopseudomonas palustris (strain TIE-1).